The primary structure comprises 386 residues: Heavy metal-associated isoprenylated plant protein 5 (386 aa).

Over residues 1-16 (MGEVQEGPKVEQEKKP) the composition is skewed to basic and acidic residues. The disordered stretch occupies residues 1-40 (MGEVQEGPKVEQEKKPAATVVPVETTDGKPKSGGGDSAAA). The HMA 1 domain occupies 49–112 (VSAFVYKVDM…KLEEKTKRKV (64 aa)). Residues cysteine 60 and cysteine 63 each contribute to the a metal cation site. Residues 129-153 (VGEKKADGGDKEAAPPAPAPAAPKE) are disordered. Residues 130–141 (GEKKADGGDKEA) are compositionally biased toward basic and acidic residues. The HMA 2 domain occupies 153-220 (ESVVPLKIRL…KLKRTVEPLV (68 aa)). 2 residues coordinate a metal cation: cysteine 164 and cysteine 167. Basic and acidic residues-rich tracts occupy residues 223–245 (KKDD…KKEA) and 252–297 (EAKK…KKDG). The disordered stretch occupies residues 223 to 301 (KKDDGAAENK…EKKKDGGGVP (79 aa)). Residue cysteine 383 is modified to Cysteine methyl ester. Cysteine 383 carries S-farnesyl cysteine lipidation. Residues 384–386 (SVM) constitute a propeptide, removed in mature form.

It belongs to the HIPP family. Post-translationally, efficiently farnesylated in vitro.

Functionally, heavy-metal-binding protein. Involved in disease resistance. This is Heavy metal-associated isoprenylated plant protein 5 from Arabidopsis thaliana (Mouse-ear cress).